The following is a 325-amino-acid chain: tRNA N6-adenosine threonylcarbamoyltransferase (325 aa).

Fe cation contacts are provided by histidine 111 and histidine 115. Substrate-binding positions include 134–138, aspartate 167, glycine 180, and asparagine 277; that span reads LISGG. Aspartate 305 is a Fe cation binding site.

This sequence belongs to the KAE1 / TsaD family. Fe(2+) serves as cofactor.

The protein localises to the cytoplasm. The protein resides in the secreted. The enzyme catalyses L-threonylcarbamoyladenylate + adenosine(37) in tRNA = N(6)-L-threonylcarbamoyladenosine(37) in tRNA + AMP + H(+). Functionally, required for the formation of a threonylcarbamoyl group on adenosine at position 37 (t(6)A37) in tRNAs that read codons beginning with adenine. Is involved in the transfer of the threonylcarbamoyl moiety of threonylcarbamoyl-AMP (TC-AMP) to the N6 group of A37, together with TsaE and TsaB. TsaD likely plays a direct catalytic role in this reaction. This chain is tRNA N6-adenosine threonylcarbamoyltransferase, found in Mannheimia haemolytica (Pasteurella haemolytica).